The primary structure comprises 596 residues: Fructan 1-exohydrolase w3 (596 aa).

A signal peptide spans 1 to 20 (MAQAWAFLLPVLVLGSYVTS). Aspartate 75 is a catalytic residue. Residues asparagine 168, asparagine 236, and asparagine 248 are each glycosylated (N-linked (GlcNAc...) asparagine). Residues cysteine 446 and cysteine 492 are joined by a disulfide bond.

It belongs to the glycosyl hydrolase 32 family. Expressed in the stem, particularly the penultimate internode. Little expression is detected in roots and in the peduncle part of the stem.

It catalyses the reaction Hydrolysis of terminal, non-reducing (2-&gt;1)-linked beta-D-fructofuranose residues in fructans.. With respect to regulation, inhibited by sucrose. Its function is as follows. Hydrolyzes inulin-type beta-(2,1)-fructans and beta-(2,1)-linkages in branched fructans. Has low activity against beta-(2,6)-linked fructans. May play a role as a beta-(2,1)-trimmer during graminan biosynthesis. The polypeptide is Fructan 1-exohydrolase w3 (Triticum aestivum (Wheat)).